A 450-amino-acid chain; its full sequence is Glucose-6-phosphate isomerase (450 aa).

Glutamate 289 (proton donor) is an active-site residue. Catalysis depends on residues histidine 310 and lysine 424.

The protein belongs to the GPI family.

The protein localises to the cytoplasm. The catalysed reaction is alpha-D-glucose 6-phosphate = beta-D-fructose 6-phosphate. The protein operates within carbohydrate biosynthesis; gluconeogenesis. It functions in the pathway carbohydrate degradation; glycolysis; D-glyceraldehyde 3-phosphate and glycerone phosphate from D-glucose: step 2/4. Functionally, catalyzes the reversible isomerization of glucose-6-phosphate to fructose-6-phosphate. The chain is Glucose-6-phosphate isomerase from Leptospira biflexa serovar Patoc (strain Patoc 1 / Ames).